A 189-amino-acid polypeptide reads, in one-letter code: Pyridoxal 5'-phosphate synthase subunit PdxT (189 aa).

47 to 49 (GES) provides a ligand contact to L-glutamine. The active-site Nucleophile is C79. Residues R106 and 135-136 (IR) contribute to the L-glutamine site. Catalysis depends on charge relay system residues H171 and E173.

Belongs to the glutaminase PdxT/SNO family. In terms of assembly, in the presence of PdxS, forms a dodecamer of heterodimers. Only shows activity in the heterodimer.

The enzyme catalyses aldehydo-D-ribose 5-phosphate + D-glyceraldehyde 3-phosphate + L-glutamine = pyridoxal 5'-phosphate + L-glutamate + phosphate + 3 H2O + H(+). It carries out the reaction L-glutamine + H2O = L-glutamate + NH4(+). The protein operates within cofactor biosynthesis; pyridoxal 5'-phosphate biosynthesis. Catalyzes the hydrolysis of glutamine to glutamate and ammonia as part of the biosynthesis of pyridoxal 5'-phosphate. The resulting ammonia molecule is channeled to the active site of PdxS. The polypeptide is Pyridoxal 5'-phosphate synthase subunit PdxT (Desulforudis audaxviator (strain MP104C)).